Reading from the N-terminus, the 309-residue chain is Sodium/potassium-transporting ATPase subunit beta-1 (309 aa).

Residues 1-45 (MSKNNGKGAKGEFEFPQPAKKQTFSEMIYNPQEGTFFGRTGKSWS) lie on the Cytoplasmic side of the membrane. The chain crosses the membrane as a helical; Signal-anchor for type II membrane protein span at residues 46–66 (QLLLFYTIFYIVLAALFTICM). The Extracellular segment spans residues 67–309 (QGLLSTISDT…GSVTFQILLD (243 aa)). Asn-133 is a glycosylation site (N-linked (GlcNAc...) asparagine). Intrachain disulfides connect Cys-143-Cys-155 and Cys-165-Cys-179. N-linked (GlcNAc...) asparagine glycosylation occurs at Asn-211. Cys-225 and Cys-282 form a disulfide bridge.

This sequence belongs to the X(+)/potassium ATPases subunit beta family. As to quaternary structure, the sodium/potassium-transporting ATPase is composed of a catalytic alpha subunit, an auxiliary non-catalytic beta subunit and an additional regulatory subunit. Interacts with nkain. In terms of tissue distribution, in embryos, it is expressed in the neurons of the CNS and PNS, in Garland cells and posterior spiracles. In adults, it is concentrated in the thorax and abdomen (muscle tissue, digestive system and Malpighian tubules) and weakly expressed in the head. Expression is diffuse in the nervous system.

The protein resides in the cell membrane. Its function is as follows. This is the non-catalytic component of the active enzyme, which catalyzes the hydrolysis of ATP coupled with the exchange of Na(+) and K(+) ions across the plasma membrane. The beta subunit regulates, through assembly of alpha/beta heterodimers, the number of sodium pumps transported to the plasma membrane. The sequence is that of Sodium/potassium-transporting ATPase subunit beta-1 (nrv1) from Drosophila melanogaster (Fruit fly).